The primary structure comprises 697 residues: Potassium-transporting ATPase ATP-binding subunit (697 aa).

Helical transmembrane passes span 55–75 (PIMF…FLPS), 79–99 (SIPG…VLFA), 245–265 (LTLI…YLGF), and 271–291 (VLVA…LSAI). The active-site 4-aspartylphosphate intermediate is the Asp-324. ATP-binding positions include Asp-361, Glu-365, 393-400 (FKAETRMS), and Lys-412. Mg(2+) is bound by residues Asp-535 and Asp-539. The next 3 membrane-spanning stretches (helical) occupy residues 605–625 (FAII…LNIM), 633–653 (AILS…PLAM), and 677–697 (GGVI…GLFI).

It belongs to the cation transport ATPase (P-type) (TC 3.A.3) family. Type IA subfamily. The system is composed of three essential subunits: KdpA, KdpB and KdpC.

It localises to the cell membrane. It carries out the reaction K(+)(out) + ATP + H2O = K(+)(in) + ADP + phosphate + H(+). Functionally, part of the high-affinity ATP-driven potassium transport (or Kdp) system, which catalyzes the hydrolysis of ATP coupled with the electrogenic transport of potassium into the cytoplasm. This subunit is responsible for energy coupling to the transport system and for the release of the potassium ions to the cytoplasm. The polypeptide is Potassium-transporting ATPase ATP-binding subunit (Bacillus cereus (strain B4264)).